A 296-amino-acid chain; its full sequence is Nucleotide-binding protein SAG0531 (296 aa).

An ATP-binding site is contributed by 13–20 (GMSGAGKT). Position 63 to 66 (63 to 66 (DMRS)) interacts with GTP.

The protein belongs to the RapZ-like family.

Functionally, displays ATPase and GTPase activities. The polypeptide is Nucleotide-binding protein SAG0531 (Streptococcus agalactiae serotype V (strain ATCC BAA-611 / 2603 V/R)).